We begin with the raw amino-acid sequence, 145 residues long: Photosystem I reaction center subunit VI-1, chloroplastic (145 aa).

The transit peptide at 1–50 (MASLATVAAVKPSAAIKGLGGSSLAGAKLSIKPSRLSFKPKSIRANGVVA) directs the protein to the chloroplast. A helical transmembrane segment spans residues 102-118 (LLLKFLILGGGSLLTYV).

Belongs to the psaH family.

Its subcellular location is the plastid. It is found in the chloroplast thylakoid membrane. In terms of biological role, possible role could be the docking of the LHC I antenna complex to the core complex. This Arabidopsis thaliana (Mouse-ear cress) protein is Photosystem I reaction center subunit VI-1, chloroplastic (PSAH1).